The following is a 367-amino-acid chain: Quinolinate synthase (367 aa).

Residues H45 and S62 each contribute to the iminosuccinate site. C109 provides a ligand contact to [4Fe-4S] cluster. Iminosuccinate-binding positions include 140–142 (YVN) and S161. A [4Fe-4S] cluster-binding site is contributed by C229. Iminosuccinate-binding positions include 255-257 (HPE) and T272. C319 contributes to the [4Fe-4S] cluster binding site.

The protein belongs to the quinolinate synthase family. Type 3 subfamily. Requires [4Fe-4S] cluster as cofactor.

The protein resides in the cytoplasm. The catalysed reaction is iminosuccinate + dihydroxyacetone phosphate = quinolinate + phosphate + 2 H2O + H(+). It functions in the pathway cofactor biosynthesis; NAD(+) biosynthesis; quinolinate from iminoaspartate: step 1/1. In terms of biological role, catalyzes the condensation of iminoaspartate with dihydroxyacetone phosphate to form quinolinate. This chain is Quinolinate synthase, found in Geobacillus kaustophilus (strain HTA426).